We begin with the raw amino-acid sequence, 203 residues long: Protein S40-6 (203 aa).

The disordered stretch occupies residues methionine 1–glutamate 33.

This sequence belongs to the senescence regulator S40 family.

Its subcellular location is the cytoplasm. The polypeptide is Protein S40-6 (Arabidopsis thaliana (Mouse-ear cress)).